The primary structure comprises 211 residues: Small ribosomal subunit protein uS3 (211 aa).

The KH type-2 domain occupies 38–106; it reads LRSFVKKTFH…EVELHIVEVK (69 aa).

Belongs to the universal ribosomal protein uS3 family. Part of the 30S ribosomal subunit. Forms a tight complex with proteins S10 and S14.

Its function is as follows. Binds the lower part of the 30S subunit head. Binds mRNA in the 70S ribosome, positioning it for translation. This is Small ribosomal subunit protein uS3 from Anaplasma phagocytophilum (strain HZ).